The sequence spans 483 residues: MVQNRAIFCFLSTIKSEETMTSESQPQVTQTRKFFGTDGIRGMANIHPMTPDLVLKLGRAAGHVFRVGDKRHTVIIGKDTRLSGYMFESALLAGLTSMGIHCLQVGPLPTPAIAFLTRALRADAGIMISASHNPFHDNGIKFFGPNGMKLPDELELEIERVLLSDEDLPMPTPHHLGRAHRIDDALGRYIEFAKTSFPKDLRLDGLRVVVDCAHGAAYKVAPAVLWELGAEVVTLGNHPNGTNINDGVGSLYPQEMVKRVQEVRADVGIAFDGDADRVVICDERGEILDGDVILAMSALEMKRKGVLRGDGVVATVMSNLGLERALAAEGLTLARTKVGDRYVLEHMLAHGFNLGGEQSGHLIFLDHNTTGDGLISALSVLALMTTQAQPLSKLANVMQRVPQVLQNVTIARGSDPMDDSRVVAAIAEAEAQLGTRGRILVRKSGTEPKVRVMVEGDDTAHITALASGVCEAIKRASNGFGEG.

Catalysis depends on S131, which acts as the Phosphoserine intermediate. The Mg(2+) site is built by S131, D272, D274, and D276. Phosphoserine is present on S131.

The protein belongs to the phosphohexose mutase family. It depends on Mg(2+) as a cofactor. Post-translationally, activated by phosphorylation.

The catalysed reaction is alpha-D-glucosamine 1-phosphate = D-glucosamine 6-phosphate. In terms of biological role, catalyzes the conversion of glucosamine-6-phosphate to glucosamine-1-phosphate. This Magnetococcus marinus (strain ATCC BAA-1437 / JCM 17883 / MC-1) protein is Phosphoglucosamine mutase.